The primary structure comprises 356 residues: MFEAFIYNISVIVAGIYLFHRLQYSENKRMVFSKAYVTVLMTIVSLLLSVYPIPYREDYLIHLTFVPLLFLGRFTNMVYTLSATVIVAIVEIVVFNNSIMYGVTLIVIAAVTSAIGPFLKQNDVLSLLILNVVTIIILFGVALVSPIYTLSEVIILIPISLIITLASAITFVDIWHFFSLVNRYENEDKYDYLTGLGNVKEFDRHLNEISRKAEKEHQSIALLLIDIDGFKDVNDTYSHKSGDAVLKQMSQLLKNYVPNQFKIFRNGGEEFSVVIHNYSLDQSVKLAENIRSGVEKSSFHLPNKEVIKLSVSIGVGYLTDDDPKSQRKVFKDADDMVHVAKNQGRNKVMFNPIINL.

6 consecutive transmembrane segments (helical) span residues 2-22 (FEAF…FHRL), 35-55 (AYVT…PIPY), 74-94 (FTNM…EIVV), 99-119 (IMYG…GPFL), 124-144 (VLSL…VALV), and 154-174 (IILI…FVDI). Positions 218–353 (QSIALLLIDI…GRNKVMFNPI (136 aa)) constitute a GGDEF domain.

It is found in the cell membrane. This is an uncharacterized protein from Staphylococcus aureus (strain bovine RF122 / ET3-1).